A 238-amino-acid polypeptide reads, in one-letter code: Protein Iojap, chloroplastic (238 aa).

A chloroplast-targeting transit peptide spans 1–66 (MASSTGLTVA…KILTSLSNSR (66 aa)).

Belongs to the Iojap/RsfS family. As to quaternary structure, interacts with chloroplast ribosomal protein uL14c (rpl14).

The protein resides in the plastid. Its subcellular location is the chloroplast. May be a ribosome silencing factor (Potential). Involved in plastid biogenesis. The protein is Protein Iojap, chloroplastic (IJ) of Arabidopsis thaliana (Mouse-ear cress).